We begin with the raw amino-acid sequence, 295 residues long: Urease accessory protein UreD (295 aa).

The protein belongs to the UreD family. In terms of assembly, ureD, UreF and UreG form a complex that acts as a GTP-hydrolysis-dependent molecular chaperone, activating the urease apoprotein by helping to assemble the nickel containing metallocenter of UreC. The UreE protein probably delivers the nickel.

Its subcellular location is the cytoplasm. Functionally, required for maturation of urease via the functional incorporation of the urease nickel metallocenter. This chain is Urease accessory protein UreD, found in Saccharophagus degradans (strain 2-40 / ATCC 43961 / DSM 17024).